A 310-amino-acid polypeptide reads, in one-letter code: Olfactory receptor 10N1 (310 aa).

At 1 to 23 the chain is on the extracellular side; the sequence is MDNYTLLNEFILLGIPQTQGLET. N-linked (GlcNAc...) asparagine glycosylation is present at Asn3. Residues 24–44 traverse the membrane as a helical segment; it reads LLFVVFLFIYFFTLLGNSLIF. At 45 to 55 the chain is on the cytoplasmic side; that stretch reads TAIISSSTLHT. The helical transmembrane segment at 56-76 threads the bilayer; that stretch reads PMYFFLGLLSVFDMLFPSVTC. Residues 77 to 95 lie on the Extracellular side of the membrane; that stretch reads PKMLFYLSVRSPAISYKGC. Cys95 and Cys187 are disulfide-bonded. The chain crosses the membrane as a helical span at residues 96–116; sequence AAQLFFYHLLGSTEGCLYSVM. The Cytoplasmic segment spans residues 117–136; it reads AYDRYVAICHPLRYMLIMKP. A helical membrane pass occupies residues 137-157; the sequence is GVCVSLVIIAWLVGCLHATIL. Residues 158–202 are Extracellular-facing; the sequence is TSLTFQLVYCASNQVDYFFCDLPAVLPLACTDSKLARKVGSINVG. The helical transmembrane segment at 203–223 threads the bilayer; it reads FLALMLLFSVCVSYVHIGVAI. At 224–237 the chain is on the cytoplasmic side; that stretch reads LRIRSAEGRQKAFS. The helical transmembrane segment at 238–258 threads the bilayer; the sequence is TCSAHLTAILCAYGPVIIIYL. Residues 259–264 are Extracellular-facing; it reads QRTPNP. Residues 265–285 traverse the membrane as a helical segment; sequence LLGAVVQILNNIVSPMLNSLI. The Cytoplasmic portion of the chain corresponds to 286–310; the sequence is YSLRNKEVKRSLRRVFQNITFHGQK.

The protein belongs to the G-protein coupled receptor 1 family.

The protein resides in the cell membrane. Odorant receptor. The sequence is that of Olfactory receptor 10N1 from Mus musculus (Mouse).